The chain runs to 529 residues: Lanosterol 14-alpha demethylase (529 aa).

Cys-468 serves as a coordination point for heme.

The protein belongs to the cytochrome P450 family. Heme is required as a cofactor.

Its subcellular location is the membrane. The enzyme catalyses a 14alpha-methyl steroid + 3 reduced [NADPH--hemoprotein reductase] + 3 O2 = a Delta(14) steroid + formate + 3 oxidized [NADPH--hemoprotein reductase] + 4 H2O + 4 H(+). It catalyses the reaction a 14alpha-methyl steroid + reduced [NADPH--hemoprotein reductase] + O2 = a 14alpha-hydroxymethyl steroid + oxidized [NADPH--hemoprotein reductase] + H2O + H(+). It carries out the reaction a 14alpha-hydroxymethyl steroid + reduced [NADPH--hemoprotein reductase] + O2 = a 14alpha-formyl steroid + oxidized [NADPH--hemoprotein reductase] + 2 H2O + H(+). The catalysed reaction is a 14alpha-formyl steroid + reduced [NADPH--hemoprotein reductase] + O2 = a Delta(14) steroid + formate + oxidized [NADPH--hemoprotein reductase] + H2O + 2 H(+). The enzyme catalyses lanosterol + 3 reduced [NADPH--hemoprotein reductase] + 3 O2 = 4,4-dimethyl-5alpha-cholesta-8,14,24-trien-3beta-ol + formate + 3 oxidized [NADPH--hemoprotein reductase] + 4 H2O + 4 H(+). It catalyses the reaction lanosterol + reduced [NADPH--hemoprotein reductase] + O2 = 32-hydroxylanosterol + oxidized [NADPH--hemoprotein reductase] + H2O + H(+). It carries out the reaction 32-hydroxylanosterol + reduced [NADPH--hemoprotein reductase] + O2 = 32-oxolanosterol + oxidized [NADPH--hemoprotein reductase] + 2 H2O + H(+). The catalysed reaction is 32-oxolanosterol + reduced [NADPH--hemoprotein reductase] + O2 = 4,4-dimethyl-5alpha-cholesta-8,14,24-trien-3beta-ol + formate + oxidized [NADPH--hemoprotein reductase] + H2O + 2 H(+). The enzyme catalyses eburicol + 3 reduced [NADPH--hemoprotein reductase] + 3 O2 = 14-demethyleburicol + formate + 3 oxidized [NADPH--hemoprotein reductase] + 4 H2O + 4 H(+). It catalyses the reaction eburicol + reduced [NADPH--hemoprotein reductase] + O2 = 32-hydroxyeburicol + oxidized [NADPH--hemoprotein reductase] + H2O + H(+). It carries out the reaction 32-hydroxyeburicol + reduced [NADPH--hemoprotein reductase] + O2 = 32-oxoeburicol + oxidized [NADPH--hemoprotein reductase] + 2 H2O + H(+). The catalysed reaction is 32-oxoeburicol + reduced [NADPH--hemoprotein reductase] + O2 = 14-demethyleburicol + formate + oxidized [NADPH--hemoprotein reductase] + H2O + 2 H(+). The protein operates within steroid biosynthesis; zymosterol biosynthesis; zymosterol from lanosterol: step 1/6. In terms of biological role, sterol 14alpha-demethylase that plays a critical role in the third module of ergosterol biosynthesis pathway, being ergosterol the major sterol component in fungal membranes that participates in a variety of functions. The third module or late pathway involves the ergosterol synthesis itself through consecutive reactions that mainly occur in the endoplasmic reticulum (ER) membrane. In filamentous fungi, during the initial step of this module, lanosterol (lanosta-8,24-dien-3beta-ol) can be metabolized to eburicol. Sterol 14alpha-demethylase catalyzes the three-step oxidative removal of the 14alpha-methyl group (C-32) of both these sterols in the form of formate, and converts eburicol and lanosterol to 14-demethyleburicol (4,4,24-trimethylergosta-8,14,24(28)-trienol) and 4,4-dimethyl-5alpha-cholesta-8,14,24-trien-3beta-ol, respectively, which are further metabolized by other enzymes in the pathway to ergosterol. Can also use substrates not intrinsic to fungi, such as 24,25-dihydrolanosterol (DHL), producing 4,4-dimethyl-8,14-cholestadien-3-beta-ol, but at lower rates than the endogenous substrates. The sequence is that of Lanosterol 14-alpha demethylase (ERG11) from Eremothecium gossypii (strain ATCC 10895 / CBS 109.51 / FGSC 9923 / NRRL Y-1056) (Yeast).